Here is a 259-residue protein sequence, read N- to C-terminus: Large ribosomal subunit protein eL8 (259 aa).

Residues M1–N24 are disordered. Phosphoserine occurs at positions 11 and 33.

It belongs to the eukaryotic ribosomal protein eL8 family. As to quaternary structure, component of the large ribosomal subunit (LSU). Mature yeast ribosomes consist of a small (40S) and a large (60S) subunit. The 40S small subunit contains 1 molecule of ribosomal RNA (18S rRNA) and at least 33 different proteins. The large 60S subunit contains 3 rRNA molecules (25S, 5.8S and 5S rRNA) and at least 46 different proteins.

It is found in the cytoplasm. Its function is as follows. Component of the ribosome, a large ribonucleoprotein complex responsible for the synthesis of proteins in the cell. The small ribosomal subunit (SSU) binds messenger RNAs (mRNAs) and translates the encoded message by selecting cognate aminoacyl-transfer RNA (tRNA) molecules. The large subunit (LSU) contains the ribosomal catalytic site termed the peptidyl transferase center (PTC), which catalyzes the formation of peptide bonds, thereby polymerizing the amino acids delivered by tRNAs into a polypeptide chain. The nascent polypeptides leave the ribosome through a tunnel in the LSU and interact with protein factors that function in enzymatic processing, targeting, and the membrane insertion of nascent chains at the exit of the ribosomal tunnel. In Schizosaccharomyces pombe (strain 972 / ATCC 24843) (Fission yeast), this protein is Large ribosomal subunit protein eL8 (rpl8).